The primary structure comprises 1722 residues: Signal-induced proliferation-associated 1-like protein 2 (1722 aa).

2 disordered regions span residues 1–29 (MSDP…RTMQ) and 44–72 (SMGP…TPAV). Positions 57–66 (EGGGGGGGPA) are enriched in gly residues. Phosphoserine is present on residues serine 149, serine 380, and serine 384. Positions 362 to 405 (ASAASQTPVPVGPAGGCESPLGSKEDLNSKENPDADEGDGKSND) are disordered. Residues 384–403 (SKEDLNSKENPDADEGDGKS) are compositionally biased toward basic and acidic residues. Residues 596–813 (LLKLDEQGLS…RTRQEYLKDL (218 aa)) form the Rap-GAP domain. The PDZ domain occupies 951-1027 (EMTLRRNGLG…VKVVIIQPHE (77 aa)). Serine 1030 carries the phosphoserine modification. Disordered regions lie at residues 1068–1246 (HRVP…FGSG) and 1331–1360 (GSMG…SKST). Low complexity-rich tracts occupy residues 1091-1103 (LQCQ…AQAA) and 1120-1131 (SSPSNQSSSSDP). Residues 1195-1218 (YKERVLQKDGSCKESPNKLSHIGD) are compositionally biased toward basic and acidic residues. Low complexity predominate over residues 1220–1237 (SCSSHSSSNTLSSNTSSN). Serine 1245 bears the Phosphoserine mark. Over residues 1331–1355 (GSMGDLSEVSSHSSGSQHSGSPSAH) the composition is skewed to low complexity. 7 positions are modified to phosphoserine: serine 1461, serine 1472, serine 1478, serine 1488, serine 1549, serine 1552, and serine 1591. Positions 1652 to 1712 (STLTGKVNQL…ATAQLRKFTE (61 aa)) form a coiled coil.

The protein is Signal-induced proliferation-associated 1-like protein 2 (Sipa1l2) of Mus musculus (Mouse).